Reading from the N-terminus, the 135-residue chain is Nucleoside diphosphate kinase (135 aa).

The ATP site is built by Lys10, Phe58, Arg86, Thr92, Arg103, and Asn113. Catalysis depends on His116, which acts as the Pros-phosphohistidine intermediate.

It belongs to the NDK family. As to quaternary structure, homotetramer. The cofactor is Mg(2+).

The protein resides in the cytoplasm. It carries out the reaction a 2'-deoxyribonucleoside 5'-diphosphate + ATP = a 2'-deoxyribonucleoside 5'-triphosphate + ADP. The enzyme catalyses a ribonucleoside 5'-diphosphate + ATP = a ribonucleoside 5'-triphosphate + ADP. Major role in the synthesis of nucleoside triphosphates other than ATP. The ATP gamma phosphate is transferred to the NDP beta phosphate via a ping-pong mechanism, using a phosphorylated active-site intermediate. The protein is Nucleoside diphosphate kinase of Nocardioides sp. (strain ATCC BAA-499 / JS614).